A 752-amino-acid chain; its full sequence is DNA ligase (752 aa).

The segment at 1-25 is disordered; the sequence is MKRNGFVPSNSVGRRGIPSNSTSSA. Residues 91-95, 140-141, and Glu170 each bind NAD(+); these read DADFD and SL. Lys172 serves as the catalytic N6-AMP-lysine intermediate. Residues Arg193, Glu233, Lys350, and Lys374 each contribute to the NAD(+) site. Cys474, Cys477, Cys493, and Cys499 together coordinate Zn(2+). One can recognise a BRCT domain in the interval 669-752; that stretch reads STPRTLAGLT…TLLDGGPAAL (84 aa).

The protein belongs to the NAD-dependent DNA ligase family. LigA subfamily. Mg(2+) serves as cofactor. Requires Mn(2+) as cofactor.

The catalysed reaction is NAD(+) + (deoxyribonucleotide)n-3'-hydroxyl + 5'-phospho-(deoxyribonucleotide)m = (deoxyribonucleotide)n+m + AMP + beta-nicotinamide D-nucleotide.. Functionally, DNA ligase that catalyzes the formation of phosphodiester linkages between 5'-phosphoryl and 3'-hydroxyl groups in double-stranded DNA using NAD as a coenzyme and as the energy source for the reaction. It is essential for DNA replication and repair of damaged DNA. This is DNA ligase from Nocardioides sp. (strain ATCC BAA-499 / JS614).